The sequence spans 682 residues: DNA ligase (682 aa).

NAD(+)-binding positions include 42–46 (DAAYD), 88–89 (SL), and Glu121. Lys123 serves as the catalytic N6-AMP-lysine intermediate. The NAD(+) site is built by Arg144, Glu180, Lys291, and Lys315. Cys409, Cys412, Cys427, and Cys433 together coordinate Zn(2+). The BRCT domain maps to 601–682 (AAGGALAGKT…FRSLAGLPPG (82 aa)).

It belongs to the NAD-dependent DNA ligase family. LigA subfamily. Mg(2+) serves as cofactor. It depends on Mn(2+) as a cofactor.

The enzyme catalyses NAD(+) + (deoxyribonucleotide)n-3'-hydroxyl + 5'-phospho-(deoxyribonucleotide)m = (deoxyribonucleotide)n+m + AMP + beta-nicotinamide D-nucleotide.. Its function is as follows. DNA ligase that catalyzes the formation of phosphodiester linkages between 5'-phosphoryl and 3'-hydroxyl groups in double-stranded DNA using NAD as a coenzyme and as the energy source for the reaction. It is essential for DNA replication and repair of damaged DNA. This chain is DNA ligase, found in Acidiphilium cryptum (strain JF-5).